The chain runs to 505 residues: 2,3-bisphosphoglycerate-independent phosphoglycerate mutase (505 aa).

The Mn(2+) site is built by Asp-11 and Ser-61. Ser-61 (phosphoserine intermediate) is an active-site residue. Substrate-binding positions include His-122, 152–153, Arg-183, Arg-189, 259–262, and Lys-332; these read RD and RTDR. The Mn(2+) site is built by Asp-399, His-403, Asp-440, His-441, and His-458.

This sequence belongs to the BPG-independent phosphoglycerate mutase family. As to quaternary structure, monomer. Requires Mn(2+) as cofactor.

The enzyme catalyses (2R)-2-phosphoglycerate = (2R)-3-phosphoglycerate. Its pathway is carbohydrate degradation; glycolysis; pyruvate from D-glyceraldehyde 3-phosphate: step 3/5. Catalyzes the interconversion of 2-phosphoglycerate and 3-phosphoglycerate. The sequence is that of 2,3-bisphosphoglycerate-independent phosphoglycerate mutase from Flavobacterium psychrophilum (strain ATCC 49511 / DSM 21280 / CIP 103535 / JIP02/86).